Here is a 118-residue protein sequence, read N- to C-terminus: DNA polymerase epsilon subunit 4 (118 aa).

2 stretches are compositionally biased toward low complexity: residues 1-11 (MAAAAAAGSGT) and 19-35 (GGEA…SAPG). The interval 1–37 (MAAAAAAGSGTPREEEAPGGEAAASQAQAPTSAPGGV) is disordered. At Ala-2 the chain carries N-acetylalanine. Thr-11 carries the post-translational modification Phosphothreonine. Ser-25 is modified (phosphoserine).

As to quaternary structure, component of the DNA polymerase epsilon complex consisting of four subunits: the catalytic subunit POLE and the accessory subunits POLE2, POLE3 and POLE4. Interaction with POLE3 is a prerequisite for further binding with POLE and POLE2.

Its subcellular location is the nucleus. In terms of biological role, accessory component of the DNA polymerase epsilon complex. Participates in DNA repair and in chromosomal DNA replication. The polypeptide is DNA polymerase epsilon subunit 4 (Pole4) (Mus musculus (Mouse)).